Reading from the N-terminus, the 393-residue chain is Pyrimidine monooxygenase RutA (393 aa).

FMN-binding positions include 79 to 80 (IK), asparagine 145, glutamate 154, 170 to 171 (RY), and serine 220.

It belongs to the NtaA/SnaA/DszA monooxygenase family. RutA subfamily.

The catalysed reaction is uracil + FMNH2 + NADH + O2 = (Z)-3-ureidoacrylate + FMN + NAD(+) + H2O + H(+). It catalyses the reaction thymine + FMNH2 + NADH + O2 = (Z)-2-methylureidoacrylate + FMN + NAD(+) + H2O + H(+). In terms of biological role, catalyzes the pyrimidine ring opening between N-3 and C-4 by an unusual flavin hydroperoxide-catalyzed mechanism, adding oxygen atoms in the process to yield ureidoacrylate peracid, that immediately reacts with FMN forming ureidoacrylate and FMN-N(5)-oxide. The FMN-N(5)-oxide reacts spontaneously with NADH to produce FMN. Requires the flavin reductase RutF to regenerate FMN in vivo. The chain is Pyrimidine monooxygenase RutA from Escherichia coli O18:K1:H7 (strain IHE3034 / ExPEC).